The chain runs to 429 residues: Adenylosuccinate synthetase (429 aa).

GTP is bound by residues 12-18 (GDEGKGK) and 40-42 (GHT). D13 functions as the Proton acceptor in the catalytic mechanism. Mg(2+)-binding residues include D13 and G40. Residues 13 to 16 (DEGK), 38 to 41 (NAGH), T128, R142, Q223, T238, and R302 each bind IMP. The active-site Proton donor is the H41. 298–304 (TTTGRPR) is a substrate binding site. Residues R304, 330-332 (SID), and 412-414 (SVG) each bind GTP.

Belongs to the adenylosuccinate synthetase family. As to quaternary structure, homodimer. Mg(2+) is required as a cofactor.

The protein localises to the cytoplasm. The enzyme catalyses IMP + L-aspartate + GTP = N(6)-(1,2-dicarboxyethyl)-AMP + GDP + phosphate + 2 H(+). It participates in purine metabolism; AMP biosynthesis via de novo pathway; AMP from IMP: step 1/2. Functionally, plays an important role in the de novo pathway of purine nucleotide biosynthesis. Catalyzes the first committed step in the biosynthesis of AMP from IMP. In Bacillus thuringiensis (strain Al Hakam), this protein is Adenylosuccinate synthetase.